The chain runs to 338 residues: GTPase Obg (338 aa).

The region spanning 1–159 (MKFVDSASVF…FTLDLELKLM (159 aa)) is the Obg domain. The disordered stretch occupies residues 123-145 (GGRGNQHFATSTHQAPRHAEPGQ). Positions 160 to 323 (ADVGLVGFPN…LKDALWRIIV (164 aa)) constitute an OBG-type G domain. GTP is bound by residues 166–173 (GFPNAGKS), 191–195 (FTTLV), 213–216 (DIPG), 280–283 (TKMD), and 304–306 (SAV). Residues Ser-173 and Thr-193 each coordinate Mg(2+).

This sequence belongs to the TRAFAC class OBG-HflX-like GTPase superfamily. OBG GTPase family. As to quaternary structure, monomer. Mg(2+) is required as a cofactor.

The protein resides in the cytoplasm. In terms of biological role, an essential GTPase which binds GTP, GDP and possibly (p)ppGpp with moderate affinity, with high nucleotide exchange rates and a fairly low GTP hydrolysis rate. Plays a role in control of the cell cycle, stress response, ribosome biogenesis and in those bacteria that undergo differentiation, in morphogenesis control. The sequence is that of GTPase Obg from Chlorobium chlorochromatii (strain CaD3).